The chain runs to 443 residues: 3-isopropylmalate dehydratase large subunit (443 aa).

[4Fe-4S] cluster-binding residues include C347, C407, and C410.

The protein belongs to the aconitase/IPM isomerase family. LeuC type 1 subfamily. As to quaternary structure, heterodimer of LeuC and LeuD. Requires [4Fe-4S] cluster as cofactor.

It carries out the reaction (2R,3S)-3-isopropylmalate = (2S)-2-isopropylmalate. It functions in the pathway amino-acid biosynthesis; L-leucine biosynthesis; L-leucine from 3-methyl-2-oxobutanoate: step 2/4. Catalyzes the isomerization between 2-isopropylmalate and 3-isopropylmalate, via the formation of 2-isopropylmaleate. The polypeptide is 3-isopropylmalate dehydratase large subunit (Buchnera aphidicola subsp. Uroleucon obscurum).